Reading from the N-terminus, the 540-residue chain is Chaperonin GroEL (540 aa).

ATP-binding positions include 29-32 (TLGP), 86-90 (DGTTT), Gly413, 476-478 (NAA), and Asp492.

The protein belongs to the chaperonin (HSP60) family. Forms a cylinder of 14 subunits composed of two heptameric rings stacked back-to-back. Interacts with the co-chaperonin GroES.

It localises to the cytoplasm. The enzyme catalyses ATP + H2O + a folded polypeptide = ADP + phosphate + an unfolded polypeptide.. Its function is as follows. Together with its co-chaperonin GroES, plays an essential role in assisting protein folding. The GroEL-GroES system forms a nano-cage that allows encapsulation of the non-native substrate proteins and provides a physical environment optimized to promote and accelerate protein folding. In Tsukamurella paurometabola (Corynebacterium paurometabolum), this protein is Chaperonin GroEL.